Consider the following 344-residue polypeptide: Dihydroorotate dehydrogenase (quinone) (344 aa).

FMN-binding positions include 64–68 and Thr88; that span reads AGLDK. Residue Lys68 coordinates substrate. 113–117 provides a ligand contact to substrate; that stretch reads NRMGF. Residues Asn144 and Asn177 each contribute to the FMN site. Asn177 contributes to the substrate binding site. Ser180 (nucleophile) is an active-site residue. Asn182 is a binding site for substrate. Residues Lys222 and Thr250 each coordinate FMN. A substrate-binding site is contributed by 251–252; the sequence is NT. FMN is bound by residues Gly273, Gly302, and 323 to 324; that span reads YS.

It belongs to the dihydroorotate dehydrogenase family. Type 2 subfamily. As to quaternary structure, monomer. The cofactor is FMN.

It localises to the cell membrane. It carries out the reaction (S)-dihydroorotate + a quinone = orotate + a quinol. Its pathway is pyrimidine metabolism; UMP biosynthesis via de novo pathway; orotate from (S)-dihydroorotate (quinone route): step 1/1. Functionally, catalyzes the conversion of dihydroorotate to orotate with quinone as electron acceptor. This chain is Dihydroorotate dehydrogenase (quinone), found in Polynucleobacter necessarius subsp. necessarius (strain STIR1).